Here is a 469-residue protein sequence, read N- to C-terminus: Sulfate adenylyltransferase subunit 1 (469 aa).

Positions 22-238 (KQLLRFITCG…LETIKIDEDR (217 aa)) constitute a tr-type G domain. The G1 stretch occupies residues 31–38 (GSVDDGKS). Residue 31–38 (GSVDDGKS) coordinates GTP. The G2 stretch occupies residues 89–93 (GITID). Residues 110–113 (DTPG) form a G3 region. GTP contacts are provided by residues 110–114 (DTPGH) and 165–168 (NKMD). The interval 165 to 168 (NKMD) is G4. The tract at residues 203-205 (SAL) is G5.

The protein belongs to the TRAFAC class translation factor GTPase superfamily. Classic translation factor GTPase family. CysN/NodQ subfamily. In terms of assembly, heterodimer composed of CysD, the smaller subunit, and CysN.

It carries out the reaction sulfate + ATP + H(+) = adenosine 5'-phosphosulfate + diphosphate. It functions in the pathway sulfur metabolism; hydrogen sulfide biosynthesis; sulfite from sulfate: step 1/3. Its function is as follows. With CysD forms the ATP sulfurylase (ATPS) that catalyzes the adenylation of sulfate producing adenosine 5'-phosphosulfate (APS) and diphosphate, the first enzymatic step in sulfur assimilation pathway. APS synthesis involves the formation of a high-energy phosphoric-sulfuric acid anhydride bond driven by GTP hydrolysis by CysN coupled to ATP hydrolysis by CysD. This is Sulfate adenylyltransferase subunit 1 from Aliarcobacter butzleri (strain RM4018) (Arcobacter butzleri).